A 610-amino-acid polypeptide reads, in one-letter code: Membrane protein insertase YidC (610 aa).

A helical membrane pass occupies residues 7–27; sequence FFITIALSILILALWQVFYLG. The disordered stretch occupies residues 36–82; that stretch reads QARIEEQQRQAQQAAQNRQASSSTGDTPQMPANPDSIPGQGDTKAAG. Low complexity predominate over residues 44 to 55; sequence RQAQQAAQNRQA. A run of 5 helical transmembrane segments spans residues 358-378, 387-407, 458-478, 510-530, and 546-566; these read FDLL…FYLI, NFGV…FPLA, WPVL…YVTI, TVPH…TMFL, and IFTW…AGLV.

It belongs to the OXA1/ALB3/YidC family. Type 1 subfamily. In terms of assembly, interacts with the Sec translocase complex via SecD. Specifically interacts with transmembrane segments of nascent integral membrane proteins during membrane integration.

It localises to the cell inner membrane. Functionally, required for the insertion and/or proper folding and/or complex formation of integral membrane proteins into the membrane. Involved in integration of membrane proteins that insert both dependently and independently of the Sec translocase complex, as well as at least some lipoproteins. Aids folding of multispanning membrane proteins. In Brucella suis biovar 1 (strain 1330), this protein is Membrane protein insertase YidC.